The primary structure comprises 268 residues: Type III pantothenate kinase 1 (268 aa).

6–13 contacts ATP; it reads DIGNTNIT. Substrate-binding positions include Tyr100 and 107 to 110; that span reads GTDR. The active-site Proton acceptor is Asp109. A K(+)-binding site is contributed by Asp133. Position 136 (Thr136) interacts with ATP.

This sequence belongs to the type III pantothenate kinase family. In terms of assembly, homodimer. The cofactor is NH4(+). It depends on K(+) as a cofactor.

The protein resides in the cytoplasm. It catalyses the reaction (R)-pantothenate + ATP = (R)-4'-phosphopantothenate + ADP + H(+). Its pathway is cofactor biosynthesis; coenzyme A biosynthesis; CoA from (R)-pantothenate: step 1/5. Its function is as follows. Catalyzes the phosphorylation of pantothenate (Pan), the first step in CoA biosynthesis. This chain is Type III pantothenate kinase 1, found in Symbiobacterium thermophilum (strain DSM 24528 / JCM 14929 / IAM 14863 / T).